The chain runs to 852 residues: Carbohydrate-responsive element-binding protein (852 aa).

The segment covering 1-12 has biased composition (low complexity); sequence MAGALAGLAAGL. Disordered regions lie at residues 1-36 and 54-80; these read MAGALAGLAAGLQVPRVAPSPDSDSDTDSEDPSLRR and VSSPHSDSLPRRRDQEGSVGPSDFGPR. Serine 20, serine 23, and serine 25 each carry phosphoserine. Residue threonine 27 is modified to Phosphothreonine. The residue at position 29 (serine 29) is a Phosphoserine. Residue serine 196 is modified to Phosphoserine. Disordered regions lie at residues 328-365, 486-527, and 548-648; these read DSLFSSGTLGPEVPPASSAMTHLSGHSRLQARNSCPGP, PCFS…NNPC, and STLL…NKTE. Low complexity predominate over residues 505-521; it reads ASPPTLAPATASPPTTA. The segment covering 548-559 has biased composition (polar residues); it reads STLLRSPGSPQE. Serine 556 bears the Phosphoserine; by AMPK mark. A compositionally biased stretch (pro residues) spans 568 to 584; sequence FLPPTPAPTPPRPPPGP. Serine 602, serine 614, and serine 631 each carry phosphoserine. Residues 649–703 form the bHLH domain; the sequence is NRRITHISAEQKRRFNIKLGFDTLHGLVSTLSAQPSLKVSKATTLQKTAEYILML. The leucine-zipper stretch occupies residues 703–724; sequence LQQERAGLQEEAQQLRDEIEEL.

As to quaternary structure, binds DNA as a heterodimer with MLX/TCFL4. Phosphorylation at Ser-556 by AMPK inactivates the DNA-binding activity. In terms of tissue distribution, expressed in liver, heart, kidney, cerebellum and intestinal tissues.

The protein resides in the nucleus. Its function is as follows. Binds DNA as a heterodimer with MLX/TCFL4 and activates transcription. Binds to the canonical E box sequence 5'-CACGTG-3'. Plays a role in transcriptional activation of glycolytic target genes. Involved in glucose-responsive gene regulation. Regulates transcription in response to changes in cellular carbohydrate abundance such as occurs during fasting to feeding metabolic transition. Refeeding stimulates MLXIPL/ChREBP transcription factor, leading to increased BCKDK to PPM1K expression ratio, phosphorylation and activation of ACLY that ultimately results in the generation of malonyl-CoA and oxaloacetate immediate substrates of de novo lipogenesis and gluconeogenesis, respectively. In Homo sapiens (Human), this protein is Carbohydrate-responsive element-binding protein (MLXIPL).